Reading from the N-terminus, the 674-residue chain is Leucine-rich repeat transmembrane protein FLRT1 (674 aa).

The N-terminal stretch at 1-51 is a signal peptide; sequence MVVAHSAATATTTPAATVTATVVMTTATMDLRDWLFLCYGLIAFLTEVIDS. Residues 52–552 are Extracellular-facing; sequence TTCPSVCRCD…QNAGPMAGLP (501 aa). 2 disulfides stabilise this stretch: C54–C60 and C58–C67. Residues 54-80 form the LRRNT domain; that stretch reads CPSVCRCDNGFIYCNDRGLTSIPSDIP. 10 LRR repeats span residues 81-105, 106-126, 127-149, 151-175, 176-197, 198-220, 222-246, 247-269, 270-292, and 293-316; these read DDATTLYLQNNQINNAGIPQDLKTK, VKVQVIYLYENDLDEFPINLP, RSLRELHLQDNNVRTIARDSLAR, PLLEKLHLDDNSVSTVSIEEDAFAD, SKQLKLLFLSRNHLSSIPSGLP, HTLEELRLDDNRISTIPLHAFKG, NSLRRLVLDGNLLANQRIADDTFSR, LQNLTELSLVRNSLAAPPLNLPS, AHLQKLYLQDNAISHIPYNTLAK, and MRELERLDLSNNNLTTLPRGLFDD. N-linked (GlcNAc...) asparagine glycosylation occurs at N305. An LRRCT domain is found at 328–379; that stretch reads NPWFCGCNLMWLRDWVRARAAVVNVRGLMCQGPEKVRGMAIKDITSEMDECF. A disulfide bond links C332 and C357. The Fibronectin type-III domain maps to 437-532; sequence KTLVIQVKPL…VCAKAETADS (96 aa). Residues 553 to 573 traverse the membrane as a helical segment; the sequence is LAGIIGGAVALVFLFLVLGAI. The Cytoplasmic segment spans residues 574–674; the sequence is CWYVHRAGEL…GIPDVDYSYT (101 aa). Y600, Y633, and Y671 each carry phosphotyrosine.

Interacts with FGFR1. Interacts (via extracellular domain) with ADGRL1/LPHN1 and ADGRL3 (via olfactomedin-like domain). Post-translationally, phosphorylated in response to FGFR1 signaling, but is not a direct substrate of FGFR1 or SRC. A mutant where the Tyr phosphorylation sites have been replaced by Phe displays constitutive FGFR1-dependent activation of downstream MAP kinases. N-glycosylated. In terms of processing, proteolytic cleavage in the juxtamembrane region gives rise to a soluble ectodomain. In terms of tissue distribution, detected in brain (at protein level).

It localises to the cell membrane. Its subcellular location is the endoplasmic reticulum membrane. The protein resides in the cytoplasmic vesicle membrane. The protein localises to the cytoplasm. It is found in the perinuclear region. It localises to the cell junction. Its subcellular location is the focal adhesion. The protein resides in the secreted. The protein localises to the cell projection. It is found in the neuron projection. Its function is as follows. Plays a role in fibroblast growth factor-mediated signaling cascades that lead to the activation of MAP kinases. Promotes neurite outgrowth via FGFR1-mediated activation of downstream MAP kinases. Promotes an increase both in neurite number and in neurite length. May play a role in cell-cell adhesion and cell guidance via its interaction with ADGRL1/LPHN1 and ADGRL3. The chain is Leucine-rich repeat transmembrane protein FLRT1 from Mus musculus (Mouse).